Consider the following 155-residue polypeptide: Small ribosomal subunit protein uS7c (155 aa).

The protein belongs to the universal ribosomal protein uS7 family. In terms of assembly, part of the 30S ribosomal subunit.

The protein localises to the plastid. The protein resides in the chloroplast. In terms of biological role, one of the primary rRNA binding proteins, it binds directly to 16S rRNA where it nucleates assembly of the head domain of the 30S subunit. This chain is Small ribosomal subunit protein uS7c (rps7), found in Schisandra chinensis (Chinese magnolia vine).